A 127-amino-acid polypeptide reads, in one-letter code: MVCLLILGLVLEQVQVEGKSCCRSTLGRNCYNLCRVRGAQKLCAGVCRCKLTSSGKCPTGFPKLALVSNSDEPDTVKYCNLGCRASMCDYMVNAAADDEEMKLYLENCGDACVNFCNGDAGLTSLTA.

The signal sequence occupies residues M1–G18. Disulfide bonds link C21/C57, C22/C49, C30/C47, and C34/C43. Residues L64 to A127 constitute a propeptide, acidic domain.

It belongs to the plant thionin (TC 1.C.44) family. 4 C-C subfamily.

The protein localises to the secreted. Its function is as follows. Thionins are small plant proteins which are toxic to animal cells. They seem to exert their toxic effect at the level of the cell membrane. Their precise function is not known. This is Alpha-hordothionin (THI1.1) from Hordeum vulgare (Barley).